Consider the following 389-residue polypeptide: Probable DNA double-strand break repair nuclease NurA (389 aa).

Residues D74 and D151 each coordinate Mn(2+).

This sequence belongs to the NurA family. Mn(2+) is required as a cofactor.

Involved in DNA double-strand break (DSB) repair. Probably acts with HerA to stimulate resection of the 5' strand and produce the long 3' single-strand that is required for RadA loading. This is Probable DNA double-strand break repair nuclease NurA from Methanocaldococcus jannaschii (strain ATCC 43067 / DSM 2661 / JAL-1 / JCM 10045 / NBRC 100440) (Methanococcus jannaschii).